The chain runs to 240 residues: Phosphoribosylaminoimidazole-succinocarboxamide synthase (240 aa).

It belongs to the SAICAR synthetase family.

It catalyses the reaction 5-amino-1-(5-phospho-D-ribosyl)imidazole-4-carboxylate + L-aspartate + ATP = (2S)-2-[5-amino-1-(5-phospho-beta-D-ribosyl)imidazole-4-carboxamido]succinate + ADP + phosphate + 2 H(+). It functions in the pathway purine metabolism; IMP biosynthesis via de novo pathway; 5-amino-1-(5-phospho-D-ribosyl)imidazole-4-carboxamide from 5-amino-1-(5-phospho-D-ribosyl)imidazole-4-carboxylate: step 1/2. The chain is Phosphoribosylaminoimidazole-succinocarboxamide synthase from Neorickettsia sennetsu (strain ATCC VR-367 / Miyayama) (Ehrlichia sennetsu).